Consider the following 196-residue polypeptide: Molybdenum cofactor guanylyltransferase (196 aa).

Residues 12–14 (LAG), Lys25, Asn53, Asp71, and Asp101 contribute to the GTP site. Asp101 lines the Mg(2+) pocket.

The protein belongs to the MobA family. In terms of assembly, monomer. Mg(2+) serves as cofactor.

The protein localises to the cytoplasm. The catalysed reaction is Mo-molybdopterin + GTP + H(+) = Mo-molybdopterin guanine dinucleotide + diphosphate. Transfers a GMP moiety from GTP to Mo-molybdopterin (Mo-MPT) cofactor (Moco or molybdenum cofactor) to form Mo-molybdopterin guanine dinucleotide (Mo-MGD) cofactor. The sequence is that of Molybdenum cofactor guanylyltransferase from Bordetella petrii (strain ATCC BAA-461 / DSM 12804 / CCUG 43448).